Here is a 501-residue protein sequence, read N- to C-terminus: Glutamyl-tRNA(Gln) amidotransferase subunit A (501 aa).

Active-site charge relay system residues include Lys-80 and Ser-155. Ser-179 acts as the Acyl-ester intermediate in catalysis.

The protein belongs to the amidase family. GatA subfamily. As to quaternary structure, heterotrimer of A, B and C subunits.

The enzyme catalyses L-glutamyl-tRNA(Gln) + L-glutamine + ATP + H2O = L-glutaminyl-tRNA(Gln) + L-glutamate + ADP + phosphate + H(+). Its function is as follows. Allows the formation of correctly charged Gln-tRNA(Gln) through the transamidation of misacylated Glu-tRNA(Gln) in organisms which lack glutaminyl-tRNA synthetase. The reaction takes place in the presence of glutamine and ATP through an activated gamma-phospho-Glu-tRNA(Gln). In Cupriavidus pinatubonensis (strain JMP 134 / LMG 1197) (Cupriavidus necator (strain JMP 134)), this protein is Glutamyl-tRNA(Gln) amidotransferase subunit A.